A 565-amino-acid polypeptide reads, in one-letter code: Arginine--tRNA ligase (565 aa).

The 'HIGH' region signature appears at 128-138 (ANPTGPLHVGH).

It belongs to the class-I aminoacyl-tRNA synthetase family. As to quaternary structure, monomer.

It is found in the cytoplasm. The enzyme catalyses tRNA(Arg) + L-arginine + ATP = L-arginyl-tRNA(Arg) + AMP + diphosphate. This is Arginine--tRNA ligase from Delftia acidovorans (strain DSM 14801 / SPH-1).